Reading from the N-terminus, the 154-residue chain is Large ribosomal subunit protein uL22 (154 aa).

This sequence belongs to the universal ribosomal protein uL22 family. In terms of assembly, part of the 50S ribosomal subunit.

This protein binds specifically to 23S rRNA. It makes multiple contacts with different domains of the 23S rRNA in the assembled 50S subunit and ribosome. In terms of biological role, the globular domain of the protein is located near the polypeptide exit tunnel on the outside of the subunit, while an extended beta-hairpin is found that lines the wall of the exit tunnel in the center of the 70S ribosome. The sequence is that of Large ribosomal subunit protein uL22 from Methanoregula boonei (strain DSM 21154 / JCM 14090 / 6A8).